The chain runs to 1184 residues: DNA-directed RNA polymerase subunit beta (1184 aa).

Residues 1160-1184 (DDDFTNQNDAFNIVQPENAAAEKTE) are disordered.

It belongs to the RNA polymerase beta chain family. As to quaternary structure, the RNAP catalytic core consists of 2 alpha, 1 beta, 1 beta' and 1 omega subunit. When a sigma factor is associated with the core the holoenzyme is formed, which can initiate transcription.

It catalyses the reaction RNA(n) + a ribonucleoside 5'-triphosphate = RNA(n+1) + diphosphate. Functionally, DNA-dependent RNA polymerase catalyzes the transcription of DNA into RNA using the four ribonucleoside triphosphates as substrates. The sequence is that of DNA-directed RNA polymerase subunit beta from Listeria welshimeri serovar 6b (strain ATCC 35897 / DSM 20650 / CCUG 15529 / CIP 8149 / NCTC 11857 / SLCC 5334 / V8).